Consider the following 227-residue polypeptide: A-type potassium channel modulatory protein KCNIP1 (227 aa).

In terms of domain architecture, EF-hand 1; degenerate spans Leu38–Pro94. 3 consecutive EF-hand domains span residues Asp97 to Gly132, Thr133 to Met168, and Thr181 to Ile216. Residues Asp146, Asn148, Asp150, Tyr152, Glu157, Asp194, Asn196, Asp198, and Glu205 each contribute to the Ca(2+) site. Residues Asp214–Met227 are interaction with KCND2.

It belongs to the recoverin family. As to quaternary structure, component of heteromultimeric potassium channels. Identified in potassium channel complexes containing KCND1, KCND2, KCND3, KCNIP1, KCNIP2, KCNIP3, KCNIP4, DPP6 and DPP10. Part of a heterooctamer composed of the tetrameric channel and four KCNIP1 chains. Probably part of a complex consisting of KCNIP1, KCNIP2 isoform 3 and KCND2. Self-associates to form homodimers and homotetramers. Interacts with KCNIP2 isoform 3 in a calcium-dependent manner. Interacts with Naja atra venom CTX3. Interacts with KCND2; this interaction mediates the capture of both the N- and C-terminus of KCND2, thus preventing KCND2 N-type inactivation and modulates the channel gating kinetics. Interacts with KCND3; each KCNIP1 monomer interacts with two adjacent KCND3 subunits, through both the N-terminal inactivation ball of a KCND3 subunit and a C-terminal helix from the adjacent KCND3 subunit, clamping them together; this interaction stabilizes the tetrameric form and modulates the channel gating kinetics namely channel activation and inactivation kinetics and rate of recovery from inactivation. As to expression, isoform 1 and isoform 2 are expressed in brain and kidney. Isoform 1 is also expressed in liver, pancreas, skeletal muscle, small intestine and testis. Isoform 2 is also expressed in lung, pancreas, leukocytes, prostate and thymus.

It localises to the cell membrane. The protein resides in the cytoplasm. Its subcellular location is the cell projection. It is found in the dendrite. In terms of biological role, regulatory subunit of Kv4/D (Shal)-type voltage-gated rapidly inactivating A-type potassium channels. Regulates channel density, inactivation kinetics and rate of recovery from inactivation in a calcium-dependent and isoform-specific manner. In vitro, modulates KCND1/Kv4.1 and KCND2/Kv4.2 currents. Increases the presence of KCND2 at the cell surface. The chain is A-type potassium channel modulatory protein KCNIP1 from Homo sapiens (Human).